We begin with the raw amino-acid sequence, 150 residues long: Putative pre-16S rRNA nuclease (150 aa).

This sequence belongs to the YqgF nuclease family.

Its subcellular location is the cytoplasm. Functionally, could be a nuclease involved in processing of the 5'-end of pre-16S rRNA. The protein is Putative pre-16S rRNA nuclease of Syntrophus aciditrophicus (strain SB).